A 292-amino-acid polypeptide reads, in one-letter code: Shikimate dehydrogenase (NADP(+)) (292 aa).

Residues 22–24 (SLS) and S69 contribute to the shikimate site. The active-site Proton acceptor is K73. Positions 94 and 111 each coordinate shikimate. NADP(+)-binding positions include 135-139 (GVGGA) and I236. Y238 provides a ligand contact to shikimate. G260 is a binding site for NADP(+).

The protein belongs to the shikimate dehydrogenase family. Homodimer.

It carries out the reaction shikimate + NADP(+) = 3-dehydroshikimate + NADPH + H(+). It participates in metabolic intermediate biosynthesis; chorismate biosynthesis; chorismate from D-erythrose 4-phosphate and phosphoenolpyruvate: step 4/7. Functionally, involved in the biosynthesis of the chorismate, which leads to the biosynthesis of aromatic amino acids. Catalyzes the reversible NADPH linked reduction of 3-dehydroshikimate (DHSA) to yield shikimate (SA). The protein is Shikimate dehydrogenase (NADP(+)) of Streptococcus pyogenes serotype M28 (strain MGAS6180).